We begin with the raw amino-acid sequence, 321 residues long: Prephenate dehydratase (321 aa).

The 187-residue stretch at 3-189 (RIAYLGPEGT…ARTRFVLVGR (187 aa)) folds into the Prephenate dehydratase domain. In terms of domain architecture, ACT spans 203–280 (SAVLRIDNQP…ADVRYLGSWP (78 aa)).

As to quaternary structure, homodimer.

It catalyses the reaction prephenate + H(+) = 3-phenylpyruvate + CO2 + H2O. The protein operates within amino-acid biosynthesis; L-phenylalanine biosynthesis; phenylpyruvate from prephenate: step 1/1. The chain is Prephenate dehydratase (pheA) from Mycobacterium bovis (strain ATCC BAA-935 / AF2122/97).